Reading from the N-terminus, the 107-residue chain is Rhodocoxin (107 aa).

A 2Fe-2S ferredoxin-type domain is found at 2-106 (PTVTYVHPDG…GLIVRLPEEQ (105 aa)). Positions 40, 46, 49, and 87 each coordinate [2Fe-2S] cluster.

The protein belongs to the adrenodoxin/putidaredoxin family. [2Fe-2S] cluster serves as cofactor.

Functionally, ferredoxin-type protein which transfers electrons from rhodocoxin reductase to cytochrome CYP116 (ThcB), which is involved in the degradation of thiocarbamate herbicides. This Rhodococcus erythropolis (Arthrobacter picolinophilus) protein is Rhodocoxin (thcC).